The primary structure comprises 94 residues: uncharacterized protein (94 aa).

A disordered region spans residues 1-22 (MATLQQAQQQNNQLTQQNNQLT). The stretch at 1 to 77 (MATLQQAQQQ…NRLHSENHRL (77 aa)) forms a coiled coil.

This is an uncharacterized protein from Acheta domesticus (House cricket).